Reading from the N-terminus, the 89-residue chain is Bombyxin A-2 (89 aa).

A signal peptide spans 1 to 19 (MKILLAIALMLSTVMWVST). Gln20 carries the post-translational modification Pyrrolidone carboxylic acid. Disulfide bonds link Cys29–Cys76, Cys41–Cys89, and Cys75–Cys80. Residues 50–68 (SDAQFASYGSAWLMPYSAG) constitute a propeptide, c peptide like.

The protein belongs to the insulin family. In terms of assembly, heterodimer of a B chain and an A chain linked by two disulfide bonds.

It localises to the secreted. Its function is as follows. Brain peptide responsible for activation of prothoracic glands to produce ecdysone in insects. This is Bombyxin A-2 (BBXA2) from Bombyx mori (Silk moth).